Here is a 1923-residue protein sequence, read N- to C-terminus: GREB1-like protein (1923 aa).

Over residues 87–96 (EDDEDDEEMS) the composition is skewed to acidic residues. 3 disordered regions span residues 87–111 (EDDE…KPAP), 246–326 (SCHS…GPPK), and 1101–1222 (RAAV…RGCR). A compositionally biased stretch (low complexity) spans 252–262 (PSSSVSSTVTP). Composition is skewed to polar residues over residues 263 to 278 (ENGT…TQTD), 296 to 307 (TPAHTGNYSLSP), and 1119 to 1161 (PQSN…SPAT). The span at 1195–1206 (SSTTSKPSSSSS) shows a compositional bias: low complexity. A helical transmembrane segment spans residues 1843-1862 (GVFFSGLLLYLCDSFVGADL).

Belongs to the GREB1 family. In terms of tissue distribution, widely expressed, with prominent expression in the cochlea. Expressed at high levels in fetal kidney. In adult tissues, highest levels in vagina, cervix and epididymis.

The protein resides in the membrane. Functionally, plays a major role in early metanephros and genital development. The protein is GREB1-like protein (GREB1L) of Homo sapiens (Human).